The following is a 233-amino-acid chain: Outer membrane protein MIP (233 aa).

The N-terminal stretch at 1 to 20 (MKMKLVTAAVMGLAMSTAMA) is a signal peptide. A PPIase FKBP-type domain is found at 144–233 (SDTVTVEYTG…IHLISVKKSS (90 aa)).

Belongs to the FKBP-type PPIase family.

The protein resides in the cell outer membrane. It carries out the reaction [protein]-peptidylproline (omega=180) = [protein]-peptidylproline (omega=0). With respect to regulation, strongly inhibited by FK506 but is completely resistant to cyclosporin A. Its function is as follows. Essential virulence factor associated with macrophage infectivity. Exhibits PPIase activity. This chain is Outer membrane protein MIP (mip), found in Legionella pneumophila subsp. pneumophila (strain Philadelphia 1 / ATCC 33152 / DSM 7513).